The following is a 346-amino-acid chain: Inositol 2-dehydrogenase/D-chiro-inositol 3-dehydrogenase (346 aa).

A compositionally biased stretch (basic and acidic residues) spans Gly-322–Lys-331. The tract at residues Gly-322–Val-346 is disordered.

It belongs to the Gfo/Idh/MocA family. As to quaternary structure, homotetramer.

The enzyme catalyses myo-inositol + NAD(+) = scyllo-inosose + NADH + H(+). The catalysed reaction is 1D-chiro-inositol + NAD(+) = scyllo-inosine + NADH + H(+). It functions in the pathway polyol metabolism; myo-inositol degradation into acetyl-CoA; acetyl-CoA from myo-inositol: step 1/7. In terms of biological role, involved in the oxidation of myo-inositol (MI) and D-chiro-inositol (DCI) to 2-keto-myo-inositol (2KMI or 2-inosose) and 1-keto-D-chiro-inositol (1KDCI), respectively. The polypeptide is Inositol 2-dehydrogenase/D-chiro-inositol 3-dehydrogenase (Shouchella clausii (strain KSM-K16) (Alkalihalobacillus clausii)).